A 680-amino-acid chain; its full sequence is WD repeat-containing protein 48 homolog (680 aa).

8 WD repeats span residues 26–65, 71–110, 113–152, 164–203, 206–245, 248–287, 290–329, and 350–389; these read QHRN…SEKY, HHND…CMST, THRD…ALTA, GSKD…RSMK, GHTE…CVQT, VHKE…NKTL, EEQA…RCTM, and KGGA…KKEQ. A disordered region spans residues 592 to 616; it reads ETTPSGGNANNSLQNSQSDANSEGS.

The protein belongs to the WD repeat WDR48 family. In terms of assembly, catalytic component of the Usp12-46 deubiquitylase complex consisting of Usp12-46, Wdr20 and Uaf1; regulatory subunit that, together wtih Wdr20, stabilizes Usp12-46. The Usp12-46 deubiquitylase complex associates with arr/arrow; the interaction leads to deubiquitination and stabilization of arr/arrow.

In terms of biological role, regulatory component of the Usp12-46 deubiquitylase complex. activates deubiquitination by increasing the catalytic turnover without increasing the affinity of deubiquitinating enzymes for the substrate. The complex deubiquitylates the wg/wingless-signaling receptor arr/arrow, which stabilizes the receptor and increases its concentration at the cell surface; this enhances the sensitivity of cells to wg/wingless-signal stimulation. This increases the amplitude and spatial range of the signaling response to the wg/wingless morphogen gradient, facilitating the precise concentration-dependent regulation of its target genes. Together with Wdr20 and Usp12-46 required for wg/wingless-mediated signaling in the wing imaginal disc and for wg/wingless-dependent regulation of intestinal stem cell proliferation. The protein is WD repeat-containing protein 48 homolog of Drosophila yakuba (Fruit fly).